A 516-amino-acid polypeptide reads, in one-letter code: Delta(24)-sterol reductase (516 aa).

An N-terminal signal peptide occupies residues methionine 1 to glycine 22. Topologically, residues leucine 23–arginine 31 are lumenal. A helical transmembrane segment spans residues tryptophan 32–valine 52. Residues arginine 53 to histidine 516 are Cytoplasmic-facing. The FAD-binding PCMH-type domain maps to phenylalanine 58–alanine 234. FAD is bound at residue threonine 163 to serine 175.

Belongs to the FAD-binding oxidoreductase/transferase type 4 family. In terms of assembly, interacts with DHCR7; this interaction regulates DHCR7 activity. The cofactor is FAD. Highly expressed in brain and adrenal gland with moderate expression in liver, lung, spleen, prostate and spinal cord. Low expression in heart, uterus and prostate. Undetectable in blood cells. In the brain, strongly expressed in cortical regions, substantia nigra, caudate nucleus, hippocampus, medulla oblongata and pons. In brains affected by Alzheimer disease, expression in the inferior temporal lobe is substantially lower than in the frontal cortex.

Its subcellular location is the endoplasmic reticulum membrane. The protein resides in the golgi apparatus membrane. The enzyme catalyses cholesterol + NADP(+) = desmosterol + NADPH + H(+). It carries out the reaction lanosterol + NADPH + H(+) = 24,25-dihydrolanosterol + NADP(+). The catalysed reaction is 5alpha-cholest-8-en-3beta-ol + NADP(+) = zymosterol + NADPH + H(+). Its pathway is steroid biosynthesis; cholesterol biosynthesis. Catalyzes the reduction of the delta-24 double bond of sterol intermediates during cholesterol biosynthesis. In addition to its cholesterol-synthesizing activity, can protect cells from oxidative stress by reducing caspase 3 activity during apoptosis induced by oxidative stress. Also protects against amyloid-beta peptide-induced apoptosis. The protein is Delta(24)-sterol reductase (DHCR24) of Homo sapiens (Human).